The following is a 232-amino-acid chain: Putative B3 domain-containing protein Os11g0242900 (232 aa).

A DNA-binding region (TF-B3 1) is located at residues 1-51 (MTVELEKIAGSFFISKGWKTFVHRTGLLSGQYIRFQVLTPSKINVLLFDKK). The interval 92–121 (SHTSNKETSSDSRTESMTDIPSSSDNSGET) is disordered. Over residues 95-107 (SNKETSSDSRTES) the composition is skewed to basic and acidic residues. The segment covering 108–121 (MTDIPSSSDNSGET) has biased composition (polar residues). Residues 140 to 232 (DIKNYISIIG…PNVKITIDVL (93 aa)) constitute a DNA-binding region (TF-B3 2).

It localises to the nucleus. In Oryza sativa subsp. japonica (Rice), this protein is Putative B3 domain-containing protein Os11g0242900.